A 488-amino-acid polypeptide reads, in one-letter code: Glutamyl-tRNA(Gln) amidotransferase subunit A (488 aa).

Residues Lys-77 and Ser-152 each act as charge relay system in the active site. The active-site Acyl-ester intermediate is Ser-176.

The protein belongs to the amidase family. GatA subfamily. As to quaternary structure, heterotrimer of A, B and C subunits.

It carries out the reaction L-glutamyl-tRNA(Gln) + L-glutamine + ATP + H2O = L-glutaminyl-tRNA(Gln) + L-glutamate + ADP + phosphate + H(+). In terms of biological role, allows the formation of correctly charged Gln-tRNA(Gln) through the transamidation of misacylated Glu-tRNA(Gln) in organisms which lack glutaminyl-tRNA synthetase. The reaction takes place in the presence of glutamine and ATP through an activated gamma-phospho-Glu-tRNA(Gln). The polypeptide is Glutamyl-tRNA(Gln) amidotransferase subunit A (Streptococcus gordonii (strain Challis / ATCC 35105 / BCRC 15272 / CH1 / DL1 / V288)).